We begin with the raw amino-acid sequence, 308 residues long: Acyltransferase drtE (308 aa).

Residues 35–159 form the AB hydrolase-1 domain; the sequence is PALVMNPGYN…AAEAKDNFSR (125 aa).

This sequence belongs to the polyketide transferase af380 family.

It functions in the pathway secondary metabolite biosynthesis; terpenoid biosynthesis. Acyltransferase; part of the gene cluster that mediates the biosynthesis of various drimane-type sesquiterpene esters, compounds that exhibit diverse biological activities and are widely present in eukaryotes. The pathway begins with the synthesis of the backbone drimenol by the terpene cyclase drtB using farnesyl pyrophosphate (FPP) as substrate. The cytochrome P450 monooxygenase drtD is then responsible for the hydroxylations at C-6, C-9 and C-12, as well as the oxidation of hydroxyl groups at C-6 and C-11 to a ketone and an aldehyde, respectively. Then, the biosynthesis can go in two directions, either the hydroxylated drimenol is further hydroxylated at C-2 and C-3 by an enzyme(s) not associated with the drt cluster, or the FAD-binding oxidoreductase drtC further oxidizes C-11 or C-12 to form the butyrolactone ring. DrtB, drtD and drtC are solely responsible for the formation of the different drimane structures observed during drimane sesquiterpenes biosynthesis. The polyketide synthase drtA synthesizes different lengths (C6 and C8) of PKS chains, which are then oxidized to varying degrees by the short-chain dehydrogenase drtF. Finally, these PKS chains are transferred onto drimane sesquiterpenes by the acyltransferase drtE, forming the sesquiterpene esters. In addition to the different fatty acyl-CoA chains produced by drtA, drtE is also able to use cinnamoyl-CoA as a substrate. The protein is Acyltransferase drtE of Aspergillus calidoustus.